Here is a 347-residue protein sequence, read N- to C-terminus: D-alanine--D-alanine ligase (347 aa).

The region spanning Lys-131–Asp-333 is the ATP-grasp domain. Glu-161–Glu-216 lines the ATP pocket. The Mg(2+) site is built by Asp-287, Glu-300, and Asn-302.

Belongs to the D-alanine--D-alanine ligase family. Mg(2+) serves as cofactor. It depends on Mn(2+) as a cofactor.

The protein resides in the cytoplasm. It catalyses the reaction 2 D-alanine + ATP = D-alanyl-D-alanine + ADP + phosphate + H(+). Its pathway is cell wall biogenesis; peptidoglycan biosynthesis. Its function is as follows. Cell wall formation. The sequence is that of D-alanine--D-alanine ligase from Streptococcus pneumoniae (strain CGSP14).